The sequence spans 67 residues: Large ribosomal subunit protein bL31 (67 aa).

The Zn(2+) site is built by Cys-16, Cys-18, Cys-36, and Cys-39.

It belongs to the bacterial ribosomal protein bL31 family. Type A subfamily. In terms of assembly, part of the 50S ribosomal subunit. The cofactor is Zn(2+).

Functionally, binds the 23S rRNA. The protein is Large ribosomal subunit protein bL31 of Aliarcobacter butzleri (strain RM4018) (Arcobacter butzleri).